The following is a 324-amino-acid chain: Lactonase drp35 (324 aa).

Residues Glu47, Ser109, Gly111, Asp129, Thr132, Tyr134, Asp137, Asn184, Asp235, and Ser236 each coordinate Ca(2+). Catalysis depends on Asp235, which acts as the Proton donor.

Belongs to the SMP-30/CGR1 family. Ca(2+) is required as a cofactor.

The protein localises to the cytoplasm. Its function is as follows. Exhibits lactonase activity. Acts in cells with perturbed membrane integrity and is possibly related to the membrane homeostasis. The protein is Lactonase drp35 (drp35) of Staphylococcus aureus (strain MW2).